The sequence spans 262 residues: Hydroxyethylthiazole kinase (262 aa).

Residue M43 coordinates substrate. R118 and T164 together coordinate ATP. Residue A191 coordinates substrate.

The protein belongs to the Thz kinase family. Mg(2+) is required as a cofactor.

The enzyme catalyses 5-(2-hydroxyethyl)-4-methylthiazole + ATP = 4-methyl-5-(2-phosphooxyethyl)-thiazole + ADP + H(+). The protein operates within cofactor biosynthesis; thiamine diphosphate biosynthesis; 4-methyl-5-(2-phosphoethyl)-thiazole from 5-(2-hydroxyethyl)-4-methylthiazole: step 1/1. Its function is as follows. Catalyzes the phosphorylation of the hydroxyl group of 4-methyl-5-beta-hydroxyethylthiazole (THZ). The chain is Hydroxyethylthiazole kinase from Cereibacter sphaeroides (strain ATCC 17025 / ATH 2.4.3) (Rhodobacter sphaeroides).